Reading from the N-terminus, the 550-residue chain is MLKNINPTHTQAWKDLTAHYEDAQDLQLSDLFANDSERFNKFSATFGSDILLDYSKNLITEETLTKLFALAEQTELKAAIAEMFSGEKINKTEDRAVLHSALRNRSNTPVVVDGEDVMPKVNAVLEKMKAFTARIVDGDWKGYTGQEITDVVNVGIGGSDLGPYMVSEALVPYKTRLNMHFVSNVDGTHIAETLKDLNPETTLFLIASKTFTTQETMTNAHSARDWFLATAQDQAHVAKHFAALSTNVGSVSEFGIDTDNMFEFWDWVGGRYSLCSAIGLSICLSIGFDNFVELLDGAHEMDQHFAQAPLEENLPVILALIGIWYNNFHGAESEAILPYDQYLHRFAAYFQQGNMESNGKCVDRGGNPVDYQTGPIIWGEPGTNGQHAFYQLIHQGTKLIPCDFIAPSISHNPLTDHHPKLMANFFAQTEALAFGKTKEQVEAEFVAAGKTLDEVKDLVPFKVFDGNRPTNSILIKQVTPKVLGSLMALYEQKIFTQGVIWNIFSFDQWGVELGKQLANQILPELNDADSIAGHDSSTNGLINAYKQWRK.

The Proton donor role is filled by Glu-356. Residues His-387 and Lys-515 contribute to the active site.

This sequence belongs to the GPI family.

The protein localises to the cytoplasm. It catalyses the reaction alpha-D-glucose 6-phosphate = beta-D-fructose 6-phosphate. Its pathway is carbohydrate biosynthesis; gluconeogenesis. It participates in carbohydrate degradation; glycolysis; D-glyceraldehyde 3-phosphate and glycerone phosphate from D-glucose: step 2/4. Its function is as follows. Catalyzes the reversible isomerization of glucose-6-phosphate to fructose-6-phosphate. This is Glucose-6-phosphate isomerase from Photobacterium profundum (strain SS9).